The chain runs to 205 residues: Holliday junction branch migration complex subunit RuvA (205 aa).

The segment at 1 to 63 is domain I; it reads MIDFVEGTLS…EDAILLYGFA (63 aa). Residues 64–142 are domain II; the sequence is TRDERDLFRK…GYTPSAILTV (79 aa). The tract at residues 143-153 is flexible linker; that stretch reads AAGDLTAGEQA. Residues 153-205 are domain III; the sequence is AVSALNEALDALTALGYSDGELQKIRNTLSEKSKEGDGVEKLIKQGLALLMRG.

This sequence belongs to the RuvA family. In terms of assembly, homotetramer. Forms an RuvA(8)-RuvB(12)-Holliday junction (HJ) complex. HJ DNA is sandwiched between 2 RuvA tetramers; dsDNA enters through RuvA and exits via RuvB. An RuvB hexamer assembles on each DNA strand where it exits the tetramer. Each RuvB hexamer is contacted by two RuvA subunits (via domain III) on 2 adjacent RuvB subunits; this complex drives branch migration. In the full resolvosome a probable DNA-RuvA(4)-RuvB(12)-RuvC(2) complex forms which resolves the HJ.

It is found in the cytoplasm. Its function is as follows. The RuvA-RuvB-RuvC complex processes Holliday junction (HJ) DNA during genetic recombination and DNA repair, while the RuvA-RuvB complex plays an important role in the rescue of blocked DNA replication forks via replication fork reversal (RFR). RuvA specifically binds to HJ cruciform DNA, conferring on it an open structure. The RuvB hexamer acts as an ATP-dependent pump, pulling dsDNA into and through the RuvAB complex. HJ branch migration allows RuvC to scan DNA until it finds its consensus sequence, where it cleaves and resolves the cruciform DNA. The polypeptide is Holliday junction branch migration complex subunit RuvA (Brevibacillus brevis (strain 47 / JCM 6285 / NBRC 100599)).